The sequence spans 232 residues: Sensory rhodopsin III (232 aa).

Helical transmembrane passes span 5–25, 39–59, 73–93, 100–120, 125–145, 168–188, and 194–214; these read IVWY…FVWF, LPPI…LIAG, FADW…LAGV, LAVA…SMSG, IAFA…IKTF, VVTW…TGII, and NFLV…ILLV. N6-(retinylidene)lysine is present on K205.

It belongs to the archaeal/bacterial/fungal opsin family. As to quaternary structure, interacts with HtrM. In terms of processing, the covalent binding of retinal to the apoprotein, bacterioopsin, generates bacteriorhodopsin.

Its subcellular location is the membrane. In terms of biological role, sensory rhodopsin. Associates with an unusual transducer lacking a methyl-accepting transducer domain found in all other photosensory transducers. The chromophore is all-trans-retinal in the dark. The protein is Sensory rhodopsin III (xop2) of Haloarcula marismortui (strain ATCC 43049 / DSM 3752 / JCM 8966 / VKM B-1809) (Halobacterium marismortui).